An 871-amino-acid chain; its full sequence is MKNLIGITLILIITILGIGFSTYYTTVFYGVPVWKEAQPTLFCASDADITSRDKHNIWATHNCVPLDPNPYEVTLANVSIRFNMEENYMVQEMKEDILSLFQQSFKPCVKLTPFCIKMTCTMTNTTNKTLNSATTTLTPTVNLSSIPNYEVYNCSFNQTTEFRDKKKQIYSLFYREDIVKEDGNNNSYYLHNCNTSVITQECDKSTFEPIPIRYCAPAGFALLKCRDQNFTGKGQCSNVSVVHCTHGIYPMIATALHLNGSLEEEETKAYFVNTSVNTPLLVKFNVSINLTCERTGNNTRGQVQIGPGMTFYNIENVVGDTRKAYCSVNATTWYRNLDWAMAAINTTMRARNETVQQTFQWQRDGDPEVTSFWFNCQGEFFYCNLTNWTNTWTANRTNNTHGTLVAPCRLRQIVNHWGIVSKGVYLPPRRGTVKCHSNITGLIMTAEKDNNNSYTPQFSAVVEDYWKVELARYKVVEIQPLSVAPRPGKRPEIKANHTRSRRDVGIGLLFLGFLSAAGSTMGAASIALTAQARGLLSGIVQQQQNLLQAIEAQQHLLQLSVWGIKQLQARMLAVEKYIRDQQLLSLWGCANKLVCHSSVPWNLTWAEDSTKCNHSDAKYYDCIWNNLTWQEWDRLVENSTGTIYSLLEKAQTQQEKNKQELLELDKWSSLWDWFDITQWLWYIKIAIIIVAGLVGLRILMFIVNVVKQVRQGYTPLFSQIPTQAEQDPEQPGGIAGGGGGRDNIRWTPSPAGFFSIVWEDLRNLLIWIYQTFQNFIWILWISLQALKQGIISLAHSLVIVHRTIIVGVRQIIEWSSNTYASLRVLLIQAIDRLANFTGWWTDLIIEGVVYIARGIRNIPRRIRQGLELALN.

Residues 1–21 form the signal peptide; sequence MKNLIGITLILIITILGIGFS. Topologically, residues 22 to 684 are extracellular; that stretch reads TYYTTVFYGV…DITQWLWYIK (663 aa). A disulfide bond links C43 and C63. 25 N-linked (GlcNAc...) asparagine; by host glycosylation sites follow: N77, N124, N127, N142, N153, N157, N185, N194, N229, N238, N259, N273, N285, N289, N297, N329, N345, N352, N384, N387, N395, N398, N438, N451, and N496. Intrachain disulfides connect C108/C202, C115/C193, C120/C154, C215/C244, and C225/C236. The interval 120–153 is V1; it reads CTMTNTTNKTLNSATTTLTPTVNLSSIPNYEVYN. Residues 154–193 are V2; the sequence is CSFNQTTEFRDKKKQIYSLFYREDIVKEDGNNNSYYLHNC. The segment at 292-325 is V3; sequence CERTGNNTRGQVQIGPGMTFYNIENVVGDTRKAY. A disulfide bond links C292 and C326. Cystine bridges form between C376–C435 and C383–C408. Residues 383–408 form a V4 region; that stretch reads CNLTNWTNTWTANRTNNTHGTLVAPC. The segment at 451 to 458 is V5; it reads NNSYTPQF. The interval 502–522 is fusion peptide; the sequence is RDVGIGLLFLGFLSAAGSTMG. An immunosuppression region spans residues 567-583; it reads LQARMLAVEKYIRDQQL. Residues N602, N613, N626, and N638 are each glycosylated (N-linked (GlcNAc...) asparagine; by host). Positions 645 to 668 form a coiled coil; the sequence is SLLEKAQTQQEKNKQELLELDKWS. Residues 663 to 684 are MPER; binding to GalCer; that stretch reads ELDKWSSLWDWFDITQWLWYIK. Residues 685-705 traverse the membrane as a helical segment; it reads IAIIIVAGLVGLRILMFIVNV. The Cytoplasmic portion of the chain corresponds to 706–871; it reads VKQVRQGYTP…IRQGLELALN (166 aa). The YXXL motif; contains endocytosis signal signature appears at 713 to 716; it reads YTPL.

As to quaternary structure, the mature envelope protein (Env) consists of a homotrimer of non-covalently associated gp120-gp41 heterodimers. The resulting complex protrudes from the virus surface as a spike. Interacts with host CD4 and CCR5. Gp120 also interacts with the C-type lectins CD209/DC-SIGN and CLEC4M/DC-SIGNR (collectively referred to as DC-SIGN(R)). The mature envelope protein (Env) consists of a homotrimer of non-covalently associated gp120-gp41 heterodimers. The resulting complex protrudes from the virus surface as a spike. In terms of processing, specific enzymatic cleavages in vivo yield mature proteins. Envelope glycoproteins are synthesized as an inactive precursor that is heavily N-glycosylated and processed likely by host cell furin in the Golgi to yield the mature SU and TM proteins. The cleavage site between SU and TM requires the minimal sequence [KR]-X-[KR]-R.

It is found in the virion membrane. The protein localises to the host cell membrane. Its subcellular location is the host endosome membrane. The surface protein gp120 (SU) attaches the virus to the host lymphoid cell by binding to the primary receptor CD4. This interaction induces a structural rearrangement creating a high affinity binding site for a chemokine coreceptor like CCR5. This peculiar 2 stage receptor-interaction strategy allows gp120 to maintain the highly conserved coreceptor-binding site in a cryptic conformation, protected from neutralizing antibodies. These changes are transmitted to the transmembrane protein gp41 and are thought to activate its fusogenic potential by unmasking its fusion peptide. In terms of biological role, surface protein gp120 (SU) may target the virus to gut-associated lymphoid tissue (GALT) by binding host ITGA4/ITGB7 (alpha-4/beta-7 integrins), a complex that mediates T-cell migration to the GALT. Interaction between gp120 and ITGA4/ITGB7 would allow the virus to enter GALT early in the infection, infecting and killing most of GALT's resting CD4+ T-cells. This T-cell depletion is believed to be the major insult to the host immune system leading to AIDS. Its function is as follows. The surface protein gp120 is a ligand for CD209/DC-SIGN and CLEC4M/DC-SIGNR, which are respectively found on dendritic cells (DCs), and on endothelial cells of liver sinusoids and lymph node sinuses. These interactions allow capture of viral particles at mucosal surfaces by these cells and subsequent transmission to permissive cells. DCs are professional antigen presenting cells, critical for host immunity by inducing specific immune responses against a broad variety of pathogens. They act as sentinels in various tissues where they take up antigen, process it, and present it to T-cells following migration to lymphoid organs. SIV subverts the migration properties of dendritic cells to gain access to CD4+ T-cells in lymph nodes. Virus transmission to permissive T-cells occurs either in trans (without DCs infection, through viral capture and transmission), or in cis (following DCs productive infection, through the usual CD4-gp120 interaction), thereby inducing a robust infection. In trans infection, bound virions remain infectious over days and it is proposed that they are not degraded, but protected in non-lysosomal acidic organelles within the DCs close to the cell membrane thus contributing to the viral infectious potential during DCs' migration from the periphery to the lymphoid tissues. On arrival at lymphoid tissues, intact virions recycle back to DCs' cell surface allowing virus transmission to CD4+ T-cells. Virion capture also seems to lead to MHC-II-restricted viral antigen presentation, and probably to the activation of SIV-specific CD4+ cells. Functionally, the transmembrane protein gp41 (TM) acts as a class I viral fusion protein. Under the current model, the protein has at least 3 conformational states: pre-fusion native state, pre-hairpin intermediate state, and post-fusion hairpin state. During fusion of viral and target intracellular membranes, the coiled coil regions (heptad repeats) assume a trimer-of-hairpins structure, positioning the fusion peptide in close proximity to the C-terminal region of the ectodomain. The formation of this structure appears to drive apposition and subsequent fusion of viral and target cell membranes. Complete fusion occurs in host cell endosomes. The virus undergoes clathrin-dependent internalization long before endosomal fusion, thus minimizing the surface exposure of conserved viral epitopes during fusion and reducing the efficacy of inhibitors targeting these epitopes. Membranes fusion leads to delivery of the nucleocapsid into the cytoplasm. The envelope glycoprotein gp160 precursor down-modulates cell surface CD4 antigen by interacting with it in the endoplasmic reticulum and blocking its transport to the cell surface. In terms of biological role, the gp120-gp41 heterodimer allows rapid transcytosis of the virus through CD4 negative cells such as simple epithelial monolayers of the intestinal, rectal and endocervical epithelial barriers. Both gp120 and gp41 specifically recognize glycosphingolipids galactosyl-ceramide (GalCer) or 3' sulfo-galactosyl-ceramide (GalS) present in the lipid rafts structures of epithelial cells. Binding to these alternative receptors allows the rapid transcytosis of the virus through the epithelial cells. This transcytotic vesicle-mediated transport of virions from the apical side to the basolateral side of the epithelial cells does not involve infection of the cells themselves. The sequence is that of Envelope glycoprotein gp160 from Simian immunodeficiency virus (isolate TAN1) (SIV-cpz).